We begin with the raw amino-acid sequence, 387 residues long: MEQPGQDPTSDDVMDSFLEKFQSQPYRGGFHEDQWEKEFEKVPLFMSRAPSEIDPRENPDLACLQSIIFDEERSPEEQAKTYKDEGNDYFKEKDYKKAVISYTEGLKKKCADPDLNAVLYTNRAAAQYYLGNFRSALNDVTAARKLKPCHLKAIIRGALCHLELKHFAEAVNWCDEGLQIDAKEKKLLEMRAKADKLKRIEQRDVRKANLKEKKERNQNEALLQAIKARNIRLSEAACEDEDSASEGLGELFLDGLSTENPHGARLSLDGQGRLSWPVLFLYPEYAQSDFISAFHEDSRFIDHLMVMFGETPSWDLEQKYCPDNLEVYFEDEDRAELYRVPAKSTLLQVLQHQRYFVKALTPAFLVCVGSSPFCKNFLRGRKVYQIR.

Position 1 is an N-acetylmethionine (Met1). Phosphoserine occurs at positions 47 and 51. TPR repeat units lie at residues 79–112 (AKTY…KCAD), 117–150 (AVLY…KPCH), and 151–184 (LKAI…DAKE). Residue Ser243 is modified to Phosphoserine.

It belongs to the TTC4 family. As to quaternary structure, interacts (via TPR repeats) with HSP90AB1. Interacts with HSPA8 and CDC6. Interacts with TBK1. Interacts with MSL1. In terms of tissue distribution, highly expressed in proliferating tissue and tumor cell lines but not in normal cell lines.

It localises to the nucleus. It is found in the nucleoplasm. The protein localises to the cytoplasm. May act as a co-chaperone for HSP90AB1. Promotes Sendai virus (SeV)-induced host cell innate immune responses. In Homo sapiens (Human), this protein is Tetratricopeptide repeat protein 4 (TTC4).